A 360-amino-acid chain; its full sequence is Peptide chain release factor 1 (360 aa).

Gln235 is subject to N5-methylglutamine. Over residues 280–293 the composition is skewed to basic and acidic residues; the sequence is DKQSHEQQAKEAAT. Residues 280–300 are disordered; that stretch reads DKQSHEQQAKEAATRKSLIGS.

It belongs to the prokaryotic/mitochondrial release factor family. Post-translationally, methylated by PrmC. Methylation increases the termination efficiency of RF1.

It is found in the cytoplasm. Peptide chain release factor 1 directs the termination of translation in response to the peptide chain termination codons UAG and UAA. The sequence is that of Peptide chain release factor 1 from Paraburkholderia phytofirmans (strain DSM 17436 / LMG 22146 / PsJN) (Burkholderia phytofirmans).